Consider the following 337-residue polypeptide: MGEDMRVVKVESKWPPIIVMVISQVAMGSVNALVKKALDVGVNHMIIGAYRIAISSFILAPIAYILEREIIPEITFRLMVDHFISGLLGASLMQFFYLLGLSYTSATVACALVSLMPAITFAFALILRTEKIKSLRTQAGMIKVMGTIICISGALFLTFYKGPHISNSHSHQEALPHNNNSDHNTKNWLLGCLYLTIGTVLISLWILFQGTLSIKYPCKFSSTCLMSIFAAFQCALLSLYKSRDVKDWIIDDRFVIGVIVYAGVIGQAMSTVSVTWGVKKLGAVFVSAIMPIALISASLFDFIILHTPLYLGSLIGSVGTITGLYVFLWGKNKDMEA.

10 helical membrane-spanning segments follow: residues 14 to 34, 46 to 66, 83 to 103, 107 to 127, 139 to 159, 188 to 208, 220 to 240, 254 to 274, 284 to 304, and 309 to 329; these read WPPI…NALV, IIGA…AYIL, FISG…GLSY, TVAC…ALIL, AGMI…FLTF, WLLG…WILF, FSST…LSLY, FVIG…TVSV, VFVS…DFII, and LYLG…VFLW. Residues 27–157 form the EamA 1 domain; the sequence is MGSVNALVKK…IICISGALFL (131 aa). Positions 220–328 constitute an EamA 2 domain; it reads FSSTCLMSIF…GTITGLYVFL (109 aa).

This sequence belongs to the drug/metabolite transporter (DMT) superfamily. Plant drug/metabolite exporter (P-DME) (TC 2.A.7.4) family.

The protein localises to the membrane. The polypeptide is WAT1-related protein At1g11460 (Arabidopsis thaliana (Mouse-ear cress)).